The chain runs to 290 residues: Ribosomal RNA small subunit methyltransferase A (290 aa).

6 residues coordinate S-adenosyl-L-methionine: asparagine 27, leucine 29, glycine 54, glutamate 75, aspartate 100, and asparagine 125.

The protein belongs to the class I-like SAM-binding methyltransferase superfamily. rRNA adenine N(6)-methyltransferase family. RsmA subfamily.

It localises to the cytoplasm. The enzyme catalyses adenosine(1518)/adenosine(1519) in 16S rRNA + 4 S-adenosyl-L-methionine = N(6)-dimethyladenosine(1518)/N(6)-dimethyladenosine(1519) in 16S rRNA + 4 S-adenosyl-L-homocysteine + 4 H(+). Specifically dimethylates two adjacent adenosines (A1518 and A1519) in the loop of a conserved hairpin near the 3'-end of 16S rRNA in the 30S particle. May play a critical role in biogenesis of 30S subunits. This chain is Ribosomal RNA small subunit methyltransferase A, found in Streptococcus pyogenes serotype M3 (strain ATCC BAA-595 / MGAS315).